Consider the following 342-residue polypeptide: 4-hydroxy-2-oxovalerate aldolase 2 (342 aa).

One can recognise a Pyruvate carboxyltransferase domain in the interval 8–260 (ITVHDMTLRD…ETGVDVFKIQ (253 aa)). 16-17 (RD) serves as a coordination point for substrate. Aspartate 17 contributes to the Mn(2+) binding site. Histidine 20 serves as the catalytic Proton acceptor. The substrate site is built by serine 170 and histidine 199. Residues histidine 199 and histidine 201 each coordinate Mn(2+). A substrate-binding site is contributed by tyrosine 290.

It belongs to the 4-hydroxy-2-oxovalerate aldolase family.

It catalyses the reaction (S)-4-hydroxy-2-oxopentanoate = acetaldehyde + pyruvate. The sequence is that of 4-hydroxy-2-oxovalerate aldolase 2 (mhpE) from Azoarcus sp. (strain BH72).